Consider the following 300-residue polypeptide: Nucleotide-binding protein Dshi_0209 (300 aa).

An ATP-binding site is contributed by 20–27 (GPSGAGRT). 67–70 (DART) is a GTP binding site.

Belongs to the RapZ-like family.

Displays ATPase and GTPase activities. In Dinoroseobacter shibae (strain DSM 16493 / NCIMB 14021 / DFL 12), this protein is Nucleotide-binding protein Dshi_0209.